A 178-amino-acid chain; its full sequence is ATP synthase subunit delta (178 aa).

It belongs to the ATPase delta chain family. F-type ATPases have 2 components, F(1) - the catalytic core - and F(0) - the membrane proton channel. F(1) has five subunits: alpha(3), beta(3), gamma(1), delta(1), epsilon(1). F(0) has three main subunits: a(1), b(2) and c(10-14). The alpha and beta chains form an alternating ring which encloses part of the gamma chain. F(1) is attached to F(0) by a central stalk formed by the gamma and epsilon chains, while a peripheral stalk is formed by the delta and b chains.

The protein localises to the cell membrane. F(1)F(0) ATP synthase produces ATP from ADP in the presence of a proton or sodium gradient. F-type ATPases consist of two structural domains, F(1) containing the extramembraneous catalytic core and F(0) containing the membrane proton channel, linked together by a central stalk and a peripheral stalk. During catalysis, ATP synthesis in the catalytic domain of F(1) is coupled via a rotary mechanism of the central stalk subunits to proton translocation. In terms of biological role, this protein is part of the stalk that links CF(0) to CF(1). It either transmits conformational changes from CF(0) to CF(1) or is implicated in proton conduction. The chain is ATP synthase subunit delta from Streptococcus sanguinis (strain SK36).